The chain runs to 233 residues: Bcl-2-like protein 1 (233 aa).

A BH4 motif is present at residues 4-24 (SNRELVVDFLSYKLSQKGYSW). Residues 28–71 (SDVEENRTEAPEGTESEMETPSAINGNPSWHLADSPAVNGATGH) form a disordered region. Ser49 carries the phosphoserine; by PLK3 modification. Ser62 bears the Phosphoserine; by CDK1 mark. The BH3 motif lies at 86 to 100 (VKQALREAGDEFELR). Residues 129-148 (ELFRDGVNWGRIVAFFSFGG) carry the BH1 motif. A BH2 motif is present at residues 180–195 (PWIQENGGWDTFVELY). A helical transmembrane segment spans residues 210-226 (FNRWFLTGMTVAGVVLL).

Belongs to the Bcl-2 family. In terms of assembly, homodimer. Interacts with BCL2L11. Interacts with BAD. Interacts with PGAM5. Interacts with HEBP2. Interacts with p53/TP53 and BBC3; interaction with BBC3 disrupts the interaction with p53/TP53. Interacts with ATP5F1A and ATP5F1B; the interactions mediate the association of isoform Bcl-X(L) with the mitochondrial membrane ATP synthase F(1)F(0) ATP synthase. Interacts with VDAC1. Interacts with BCL2L11 (via BH3). Interacts with RNF183. Interacts with GIMAP3/IAN4 and GIMAP5/IAN5. Interacts with GIMAP5 and HSPA8/HSC70; the interaction between HSPA8 and BCL2L1 is impaired in the absence of GIMAP5. Interacts with isoform 4 of CLU; this interaction releases and activates BAX and promotes cell death. As to quaternary structure, forms heterodimers with BAX, BAK or BCL2; heterodimerization with BAX does not seem to be required for anti-apoptotic activity. Interacts with isoform 1 of SIVA1; the interaction inhibits the anti-apoptotic activity. Interacts with IKZF3. Interacts with RTL10/BOP. Interacts with DNM1L and CLTA; DNM1L and BCL2L1 isoform BCL-X(L) may form a complex in synaptic vesicles that also contains clathrin and MFF. Interacts (via the loop between motifs BH4 and BH3) with NLRP1 (via LRR repeats), but not with NLRP2, NLRP3, NLRP4, PYCARD, nor MEFV. Interacts with BECN1. In terms of processing, proteolytically cleaved by caspases during apoptosis. The cleaved protein, lacking the BH4 motif, has pro-apoptotic activity. Phosphorylated on Ser-62 by CDK1. This phosphorylation is partial in normal mitotic cells, but complete in G2-arrested cells upon DNA-damage, thus promoting subsequent apoptosis probably by triggering caspases-mediated proteolysis. Phosphorylated by PLK3, leading to regulate the G2 checkpoint and progression to cytokinesis during mitosis. Phosphorylation at Ser-49 appears during the S phase and G2, disappears rapidly in early mitosis during prometaphase, metaphase and early anaphase, and re-appears during telophase and cytokinesis. Post-translationally, ubiquitinated by RNF183 during prolonged ER stress, leading to degradation by the proteosome. Bcl-X(S) is expressed at high levels in cells that undergo a high rate of turnover, such as developing lymphocytes. In contrast, Bcl-X(L) is found in tissues containing long-lived postmitotic cells, such as adult brain.

Its subcellular location is the mitochondrion inner membrane. The protein resides in the mitochondrion outer membrane. It is found in the mitochondrion matrix. It localises to the cytoplasmic vesicle. The protein localises to the secretory vesicle. Its subcellular location is the synaptic vesicle membrane. The protein resides in the cytoplasm. It is found in the cytosol. It localises to the cytoskeleton. The protein localises to the microtubule organizing center. Its subcellular location is the centrosome. The protein resides in the nucleus membrane. Its function is as follows. Potent inhibitor of cell death. Inhibits activation of caspases. Appears to regulate cell death by blocking the voltage-dependent anion channel (VDAC) by binding to it and preventing the release of the caspase activator, CYC1, from the mitochondrial membrane. Also acts as a regulator of G2 checkpoint and progression to cytokinesis during mitosis. Functionally, isoform Bcl-X(L) also regulates presynaptic plasticity, including neurotransmitter release and recovery, number of axonal mitochondria as well as size and number of synaptic vesicle clusters. During synaptic stimulation, increases ATP availability from mitochondria through regulation of mitochondrial membrane ATP synthase F(1)F(0) activity and regulates endocytic vesicle retrieval in hippocampal neurons through association with DMN1L and stimulation of its GTPase activity in synaptic vesicles. May attenuate inflammation impairing NLRP1-inflammasome activation, hence CASP1 activation and IL1B release. Isoform Bcl-X(S) promotes apoptosis. This is Bcl-2-like protein 1 (BCL2L1) from Homo sapiens (Human).